Consider the following 237-residue polypeptide: Large ribosomal subunit protein uL1 (237 aa).

It belongs to the universal ribosomal protein uL1 family. Part of the 50S ribosomal subunit.

In terms of biological role, binds directly to 23S rRNA. The L1 stalk is quite mobile in the ribosome, and is involved in E site tRNA release. Functionally, protein L1 is also a translational repressor protein, it controls the translation of the L11 operon by binding to its mRNA. The chain is Large ribosomal subunit protein uL1 from Synechococcus elongatus (strain ATCC 33912 / PCC 7942 / FACHB-805) (Anacystis nidulans R2).